A 35-amino-acid polypeptide reads, in one-letter code: uncharacterized protein (35 aa).

The helical transmembrane segment at L14–F34 threads the bilayer.

The protein localises to the endoplasmic reticulum membrane. This is an uncharacterized protein from Saccharomyces cerevisiae (strain ATCC 204508 / S288c) (Baker's yeast).